Consider the following 512-residue polypeptide: ETS translocation variant 3 (512 aa).

A DNA-binding region (ETS) is located at residues 35–116 (IQLWHFILEL…KGKRFTYKFN (82 aa)). Positions 136–222 (VPQSAPPVPT…NAIGGGGIGH (87 aa)) are disordered. A phosphoserine mark is found at S139, S159, and S315. A compositionally biased stretch (polar residues) spans 158–184 (HSPTNDVQPGRFSASSLTASGQESSNG). Positions 336–512 (PEESTQFSIK…QGLATAAADA (177 aa)) are disordered. Basic and acidic residues-rich tracts occupy residues 380–406 (IKVEPASEKDPESLRQSAREKEEHTQE), 453–468 (DRPGKEPSAPEKKEDA), and 479–491 (RWNDDPEARELSK). K381 is covalently cross-linked (Glycyl lysine isopeptide (Lys-Gly) (interchain with G-Cter in SUMO2)). K388 is modified (N6-acetyllysine; alternate). A Glycyl lysine isopeptide (Lys-Gly) (interchain with G-Cter in SUMO2); alternate cross-link involves residue K388.

The protein belongs to the ETS family.

It localises to the nucleus. Functionally, transcriptional repressor that contribute to growth arrest during terminal macrophage differentiation by repressing target genes involved in Ras-dependent proliferation. Represses MMP1 promoter activity. The protein is ETS translocation variant 3 (ETV3) of Homo sapiens (Human).